Consider the following 168-residue polypeptide: Endoribonuclease YbeY (168 aa).

3 residues coordinate Zn(2+): histidine 132, histidine 136, and histidine 142.

It belongs to the endoribonuclease YbeY family. Zn(2+) serves as cofactor.

The protein resides in the cytoplasm. In terms of biological role, single strand-specific metallo-endoribonuclease involved in late-stage 70S ribosome quality control and in maturation of the 3' terminus of the 16S rRNA. This chain is Endoribonuclease YbeY, found in Clostridium perfringens (strain SM101 / Type A).